A 1287-amino-acid chain; its full sequence is DENN domain-containing protein 5A (1287 aa).

The uDENN domain maps to 57 to 259; sequence STTEGENFEQ…EVPLPPPGRS (203 aa). Serine 193 bears the Phosphoserine mark. The cDENN domain maps to 278–414; sequence ELPLFDFPVK…LEFVQEVSEI (137 aa). Residues 416–598 enclose the dDENN domain; sequence MAFGVPPEGN…IMCHDDDDKD (183 aa). The RUN 1 domain occupies 787–950; the sequence is VEENTLIASL…DYFCFTNVFT (164 aa). The 109-residue stretch at 954-1062 folds into the PLAT domain; it reads IPYHILIVPS…DDGSLERVLV (109 aa). Threonine 1079 bears the Phosphothreonine mark. Serine 1085, serine 1087, and serine 1096 each carry phosphoserine. One can recognise an RUN 2 domain in the interval 1134-1280; sequence TLLLCGECGL…QEFNITLDTS (147 aa).

It belongs to the RAB6IP1 family. As to quaternary structure, interacts with RAB6A bound to GTP.

It localises to the golgi apparatus membrane. Its function is as follows. Guanine nucleotide exchange factor (GEF) which may activate RAB6A and RAB39A and/or RAB39B. Promotes the exchange of GDP to GTP, converting inactive GDP-bound Rab proteins into their active GTP-bound form. Involved in the negative regulation of neurite outgrowth. The chain is DENN domain-containing protein 5A (Dennd5a) from Mus musculus (Mouse).